The sequence spans 589 residues: ATP-dependent ubiquitin transferase-like protein Cap2 (589 aa).

Residue C13 forms a Glycyl cysteine dithioester (Cys-Gly) (interchain with G-Cter in DncV) linkage. K77 is covalently cross-linked (Glycyl lysine isopeptide (Lys-Gly) (interchain with G-Cter in DncV)). The active-site For E2-like domain is the C91. Glycyl lysine isopeptide (Lys-Gly) (interchain with G-Cter in DncV) cross-links involve residues K305, K387, and K484. C493 participates in a covalent cross-link: Glycyl cysteine dithioester (Cys-Gly) (interchain with G-Cter in DncV). Residues C493, C496, and C513 each act as for E1-like domain in the active site. A Glycyl cysteine dithioester (Cys-Gly) (interchain with G-Cter in DncV) cross-link involves residue C513. A Glycyl lysine isopeptide (Lys-Gly) (interchain with G-Cter in DncV) cross-link involves residue K523.

This sequence in the C-terminal section; belongs to the HesA/MoeB/ThiF family. In terms of assembly, a Cap2 dimer is bound on either side by a DncV monomer. Conjugated to DncV via 5 different Lys residues and 3 Cys residues.

Functionally, CD-NTase priming component of a CBASS antiviral system. CBASS (cyclic oligonucleotide-based antiphage signaling system) provides immunity against bacteriophages. The CD-NTase protein (DncV) synthesizes cyclic nucleotides in response to infection; these serve as specific second messenger signals. The signals activate a diverse range of effectors, leading to bacterial cell death and thus abortive phage infection. A type II-A(GA) CBASS system. In terms of biological role, conjugates DncV to itself in vitro and to other cellular proteins in vivo; conjugation requires ATP. This primes DncV, upon phage infection CdnA activates and makes cyclic nucleotides. Its function is as follows. Protects E.coli against phage infection. When capV and dncV are introduced in E.coli MG1655 there is 1000-fold protection against phage P1; protection against other phage (T2, T4, T5, T6 and lambda-vir) requires the 2 subsequent genes. In another paper the capV-dncV-cap2-cap3 operon gives 10(4)-10(5)-fold protection against phages lambda, T2, T4 and T6, about 1000-fold protection against P1 and 10-fold protection against T5. The polypeptide is ATP-dependent ubiquitin transferase-like protein Cap2 (Escherichia coli (strain TW11681)).